Here is a 370-residue protein sequence, read N- to C-terminus: Phosphoserine aminotransferase (370 aa).

Residue Arg42 participates in L-glutamate binding. The pyridoxal 5'-phosphate site is built by Trp108, Thr158, Asp182, and Gln205. Residue Lys206 is modified to N6-(pyridoxal phosphate)lysine. Asn247–Thr248 contributes to the pyridoxal 5'-phosphate binding site.

This sequence belongs to the class-V pyridoxal-phosphate-dependent aminotransferase family. SerC subfamily. Homodimer. Pyridoxal 5'-phosphate is required as a cofactor.

It is found in the cytoplasm. It catalyses the reaction O-phospho-L-serine + 2-oxoglutarate = 3-phosphooxypyruvate + L-glutamate. It carries out the reaction 4-(phosphooxy)-L-threonine + 2-oxoglutarate = (R)-3-hydroxy-2-oxo-4-phosphooxybutanoate + L-glutamate. It functions in the pathway amino-acid biosynthesis; L-serine biosynthesis; L-serine from 3-phospho-D-glycerate: step 2/3. The protein operates within cofactor biosynthesis; pyridoxine 5'-phosphate biosynthesis; pyridoxine 5'-phosphate from D-erythrose 4-phosphate: step 3/5. Its function is as follows. Catalyzes the reversible conversion of 3-phosphohydroxypyruvate to phosphoserine and of 3-hydroxy-2-oxo-4-phosphonooxybutanoate to phosphohydroxythreonine. This chain is Phosphoserine aminotransferase, found in Albidiferax ferrireducens (strain ATCC BAA-621 / DSM 15236 / T118) (Rhodoferax ferrireducens).